Consider the following 672-residue polypeptide: Putative per-hexamer repeat protein 5 (672 aa).

Gly residues-rich tracts occupy residues 141-161, 171-191, 215-233, 243-263, 273-295, 303-355, and 365-389; these read TGTG…GTGT, TDRG…GTGT, TGTG…GTDT, and TGTG…GSGS. Disordered stretches follow at residues 141–193 and 213–672; these read TGTG…GTGT and TGTG…TGTA. Positions 390-424 are enriched in low complexity; it reads GTAKVTGTATTTATVTETGTAKVTGTDTGTAKVTG. Over residues 425-469 the composition is skewed to gly residues; sequence TGTGTGTGTGTGTGTGTGTGTGTGTGTGTGTGTGTGTGTGTGSGS. Over residues 470–486 the composition is skewed to low complexity; the sequence is GTAKVTGTDTGTAKVTG. Positions 487-537 are enriched in gly residues; that stretch reads TGTGTGTGTGTGTGTGTGTGTGTGSGSGSGSGSGSGSGTGTGTGLGSGSGS. The span at 538–552 shows a compositional bias: low complexity; sequence GTAKVTGTGTAKVTG. The segment covering 553–617 has biased composition (gly residues); it reads TGTGTGTGTG…GTGTGTGTGT (65 aa). Positions 618 to 636 are enriched in low complexity; sequence GTSTVTVRGTGTGTATATG. Gly residues-rich tracts occupy residues 637 to 653 and 663 to 672; these read TGTG…GTGT and RGTGTGTGTA.

The protein is Putative per-hexamer repeat protein 5 (Phxr5) of Mus musculus (Mouse).